A 504-amino-acid chain; its full sequence is D-alanine--D-alanyl carrier protein ligase (504 aa).

152 to 153 (TS) contacts ATP. D197 is a binding site for D-alanine. 292–297 (NTYGPT) lines the ATP pocket. Residue V301 participates in D-alanine binding. ATP-binding positions include D383, 394 to 397 (YNGR), and K492. K492 contributes to the D-alanine binding site.

It belongs to the ATP-dependent AMP-binding enzyme family. DltA subfamily.

It is found in the cytoplasm. The enzyme catalyses holo-[D-alanyl-carrier protein] + D-alanine + ATP = D-alanyl-[D-alanyl-carrier protein] + AMP + diphosphate. It participates in cell wall biogenesis; lipoteichoic acid biosynthesis. Functionally, catalyzes the first step in the D-alanylation of lipoteichoic acid (LTA), the activation of D-alanine and its transfer onto the D-alanyl carrier protein (Dcp) DltC. In an ATP-dependent two-step reaction, forms a high energy D-alanyl-AMP intermediate, followed by transfer of the D-alanyl residue as a thiol ester to the phosphopantheinyl prosthetic group of the Dcp. D-alanylation of LTA plays an important role in modulating the properties of the cell wall in Gram-positive bacteria, influencing the net charge of the cell wall. This chain is D-alanine--D-alanyl carrier protein ligase, found in Bacillus cereus (strain B4264).